A 259-amino-acid chain; its full sequence is Deoxyribose-phosphate aldolase (259 aa).

Asp102 acts as the Proton donor/acceptor in catalysis. Lys167 (schiff-base intermediate with acetaldehyde) is an active-site residue. The active-site Proton donor/acceptor is the Lys201.

This sequence belongs to the DeoC/FbaB aldolase family. DeoC type 2 subfamily.

The protein localises to the cytoplasm. The catalysed reaction is 2-deoxy-D-ribose 5-phosphate = D-glyceraldehyde 3-phosphate + acetaldehyde. It functions in the pathway carbohydrate degradation; 2-deoxy-D-ribose 1-phosphate degradation; D-glyceraldehyde 3-phosphate and acetaldehyde from 2-deoxy-alpha-D-ribose 1-phosphate: step 2/2. Its function is as follows. Catalyzes a reversible aldol reaction between acetaldehyde and D-glyceraldehyde 3-phosphate to generate 2-deoxy-D-ribose 5-phosphate. In Erwinia tasmaniensis (strain DSM 17950 / CFBP 7177 / CIP 109463 / NCPPB 4357 / Et1/99), this protein is Deoxyribose-phosphate aldolase.